We begin with the raw amino-acid sequence, 265 residues long: Type III pantothenate kinase (265 aa).

Residue 6-13 (DVGNTHTV) coordinates ATP. 112-115 (GADR) provides a ligand contact to substrate. The active-site Proton acceptor is the Asp114. A K(+)-binding site is contributed by Asp134. An ATP-binding site is contributed by Thr137. Substrate is bound at residue Thr189.

Belongs to the type III pantothenate kinase family. As to quaternary structure, homodimer. It depends on NH4(+) as a cofactor. Requires K(+) as cofactor.

The protein resides in the cytoplasm. It catalyses the reaction (R)-pantothenate + ATP = (R)-4'-phosphopantothenate + ADP + H(+). It participates in cofactor biosynthesis; coenzyme A biosynthesis; CoA from (R)-pantothenate: step 1/5. Functionally, catalyzes the phosphorylation of pantothenate (Pan), the first step in CoA biosynthesis. In Streptomyces coelicolor (strain ATCC BAA-471 / A3(2) / M145), this protein is Type III pantothenate kinase.